The sequence spans 380 residues: tRNA pseudouridine synthase B (380 aa).

The Nucleophile role is filled by Asp-63. Residues 309-339 (QNVEDDNDDNDDNDDNDDNDDNDDNDDNDDN) are disordered. Residues 311 to 338 (VEDDNDDNDDNDDNDDNDDNDDNDDNDD) show a composition bias toward acidic residues.

Belongs to the pseudouridine synthase TruB family. Type 1 subfamily.

It carries out the reaction uridine(55) in tRNA = pseudouridine(55) in tRNA. Responsible for synthesis of pseudouridine from uracil-55 in the psi GC loop of transfer RNAs. In Psychrobacter arcticus (strain DSM 17307 / VKM B-2377 / 273-4), this protein is tRNA pseudouridine synthase B.